A 297-amino-acid chain; its full sequence is Iron-sulfur cluster assembly SufBD family protein ycf24 (297 aa).

Belongs to the iron-sulfur cluster assembly SufBD family.

It localises to the plastid. It is found in the chloroplast. This is Iron-sulfur cluster assembly SufBD family protein ycf24 (ycf24) from Antithamnion sp. (Red alga).